Reading from the N-terminus, the 510-residue chain is tRNA(Ile)-lysidine synthase (510 aa).

S32–S37 lines the ATP pocket.

This sequence belongs to the tRNA(Ile)-lysidine synthase family.

It is found in the cytoplasm. The enzyme catalyses cytidine(34) in tRNA(Ile2) + L-lysine + ATP = lysidine(34) in tRNA(Ile2) + AMP + diphosphate + H(+). Its function is as follows. Ligates lysine onto the cytidine present at position 34 of the AUA codon-specific tRNA(Ile) that contains the anticodon CAU, in an ATP-dependent manner. Cytidine is converted to lysidine, thus changing the amino acid specificity of the tRNA from methionine to isoleucine. The protein is tRNA(Ile)-lysidine synthase of Blochmanniella pennsylvanica (strain BPEN).